The following is a 330-amino-acid chain: Complement factor H-related protein 1 (330 aa).

An N-terminal signal peptide occupies residues 1–18; it reads MWLLVSVILISRISSVGG. Sushi domains follow at residues 22-84, 85-142, 145-203, 206-264, and 273-329; these read FCDF…PKCL, RLCF…KCRS, TSCV…QCKD, GKCG…KCLH, and MENY…TCAK. 10 disulfides stabilise this stretch: Cys23–Cys72, Cys55–Cys83, Cys87–Cys129, Cys114–Cys140, Cys147–Cys190, Cys176–Cys201, Cys208–Cys251, Cys237–Cys262, Cys266–Cys317, and Cys300–Cys327. Asn126 carries N-linked (GlcNAc...) asparagine glycosylation. An N-linked (GlcNAc...) asparagine glycan is attached at Asn194.

Head-to-tail homodimer and heterodimer with CFHR2 or CFHR5. As to quaternary structure, (Microbial infection) Interacts with C.albicans GPD2; the interaction is direct and leads to the degradation of C3. N-glycosylated. Two forms are observed; one with a single side chain and the other with two. As to expression, expressed by the liver and secreted in plasma.

It is found in the secreted. Functionally, involved in complement regulation. The dimerized forms have avidity for tissue-bound complement fragments and efficiently compete with the physiological complement inhibitor CFH. Can associate with lipoproteins and may play a role in lipid metabolism. This Homo sapiens (Human) protein is Complement factor H-related protein 1 (CFHR1).